Here is a 188-residue protein sequence, read N- to C-terminus: Large ribosomal subunit protein bL35m (188 aa).

Belongs to the bacterial ribosomal protein bL35 family.

It is found in the mitochondrion. This is Large ribosomal subunit protein bL35m (MRPL35) from Pongo abelii (Sumatran orangutan).